A 269-amino-acid polypeptide reads, in one-letter code: MAVGIFDSGLGGLTVLEAAQKRLPEVEFLYYADSAHAPYGVRTPDDIFQLTRAAVHDLWNRGCDLVILACNTASAAALRRMQEEGVPPGKRVLGVFVPLIEALTERQWGDNSPPREVEVKNVALFATPATVASRAFQRELAFRAIGVDVEAQACGGVVDAIEEGDLILAEALVRSHVDALKRKMPYPQAAILGCTHYPLMEPIFQDALGPDVRVFSQGNLVADSLADYLERHPNMRGSGAAGYLTTGKPATVSNRATQFLRRQITFAAA.

Substrate contacts are provided by residues 7–8 (DS) and 39–40 (YG). The active-site Proton donor/acceptor is Cys70. 71–72 (NT) lines the substrate pocket. Cys194 functions as the Proton donor/acceptor in the catalytic mechanism. Residue 195 to 196 (TH) participates in substrate binding.

The protein belongs to the aspartate/glutamate racemases family.

It carries out the reaction L-glutamate = D-glutamate. Its pathway is cell wall biogenesis; peptidoglycan biosynthesis. Its function is as follows. Provides the (R)-glutamate required for cell wall biosynthesis. The chain is Glutamate racemase from Ruegeria pomeroyi (strain ATCC 700808 / DSM 15171 / DSS-3) (Silicibacter pomeroyi).